The primary structure comprises 239 residues: Ribonuclease HII (239 aa).

An RNase H type-2 domain is found at 30-221 (GPVAGVDEVG…VRRLVTAGTP (192 aa)). Residues aspartate 36, glutamate 37, and aspartate 130 each coordinate a divalent metal cation.

Belongs to the RNase HII family. The cofactor is Mn(2+). Requires Mg(2+) as cofactor.

The protein resides in the cytoplasm. It catalyses the reaction Endonucleolytic cleavage to 5'-phosphomonoester.. In terms of biological role, endonuclease that specifically degrades the RNA of RNA-DNA hybrids. The chain is Ribonuclease HII from Mycobacterium sp. (strain JLS).